The chain runs to 107 residues: Universal stress protein B homolog (107 aa).

2 consecutive transmembrane segments (helical) span residues Thr6–Leu26 and Val86–Ile106.

The protein belongs to the universal stress protein B family.

It localises to the cell inner membrane. The polypeptide is Universal stress protein B homolog (Vibrio parahaemolyticus serotype O3:K6 (strain RIMD 2210633)).